A 229-amino-acid polypeptide reads, in one-letter code: Ribonuclease S-6 (229 aa).

A signal peptide spans 1-27 (MGITGMIYMVPMVFSLIVLISCSSTMG). Q36 is a binding site for RNA. A disulfide bond links C42 and C49. H60 is a binding site for RNA. Residue H60 is the Proton donor of the active site. An intrachain disulfide couples C75 to C119. N-linked (GlcNAc) asparagine glycans are attached at residues N77 and N87. Residues 98-99 (NV), F108, 111-112 (RQ), and 115-116 (KH) each bind RNA. Residue Q112 is part of the active site. H116 functions as the Proton acceptor in the catalytic mechanism. N-linked (GlcNAc...) (high mannose) asparagine glycosylation occurs at N145. 2 disulfides stabilise this stretch: C184-C222 and C199-C210. A glycan (N-linked (GlcNAc) asparagine; alternate) is linked at N188. Residues N188 and N203 are each glycosylated (N-linked (GlcNAc...) asparagine; alternate).

The protein belongs to the RNase T2 family. In terms of processing, the N-glycans attached at Asn-188 and Asn-203 consist of either monosaccharide (GlcNAc) or disaccharide (GlcNAc-GlcNAc) that could not be distinguished.

The enzyme catalyses a ribonucleotidyl-ribonucleotide-RNA + H2O = a 3'-end 3'-phospho-ribonucleotide-RNA + a 5'-end dephospho-ribonucleoside-RNA + H(+). Functionally, self-incompatibility (SI) is the inherited ability of a flowering plant to prevent self-fertilization by discriminating between self and non-self pollen during pollination. In many species, self-incompatibility is controlled by the single, multiallelic locus S. This is Ribonuclease S-6 from Pyrus pyrifolia (Chinese pear).